The primary structure comprises 247 residues: MTTNPKPAYRRILLKLSGEALMGDEGFGIDPKVLDRMAQEIKELVEMGIQVGLVIGGGNLFRGAGLAEAGMNRVVGDQMGMLATVMNGLAMRDALHRAFVNTRLMSAIDLAGVCERYNWANAISLLKSGRVVIFSAGTGNPFFTTDSAACLRGIEIEADAVLKATKVDGVYSEDPAKNPEAELYSELSYDEVLDKELKVMDLAAFTLARDHNIPIRVFNMNKPGALKSVIMGNTEGTVISHKKRTET.

15–18 (KLSG) lines the ATP pocket. An involved in allosteric activation by GTP region spans residues 23–28 (GDEGFG). A UMP-binding site is contributed by glycine 57. Residues glycine 58 and arginine 62 each coordinate ATP. UMP-binding positions include aspartate 77 and 138–145 (TGNPFFTT). ATP is bound by residues threonine 165, tyrosine 171, and aspartate 174.

It belongs to the UMP kinase family. Homohexamer.

The protein localises to the cytoplasm. It carries out the reaction UMP + ATP = UDP + ADP. Its pathway is pyrimidine metabolism; CTP biosynthesis via de novo pathway; UDP from UMP (UMPK route): step 1/1. With respect to regulation, allosterically activated by GTP. Inhibited by UTP. Its function is as follows. Catalyzes the reversible phosphorylation of UMP to UDP. The polypeptide is Uridylate kinase (Colwellia psychrerythraea (strain 34H / ATCC BAA-681) (Vibrio psychroerythus)).